Reading from the N-terminus, the 297-residue chain is Hydroxysqualene synthase (297 aa).

It belongs to the phytoene/squalene synthase family. HpnC subfamily.

It carries out the reaction presqualene diphosphate + H2O = hydroxysqualene + diphosphate. It participates in secondary metabolite biosynthesis; hopanoid biosynthesis. In terms of biological role, involved in the biosynthesis of the hopanoid precursor squalene (SQ) from farnesyl diphosphate (FPP). Catalyzes the second step, the conversion of presqualene diphosphate (PSPP) to hydroxysqualene (HSQ). The chain is Hydroxysqualene synthase from Zymomonas mobilis subsp. mobilis (strain ATCC 31821 / ZM4 / CP4).